The chain runs to 868 residues: Alanine--tRNA ligase (868 aa).

Positions 553, 557, 657, and 661 each coordinate Zn(2+). Residues 831 to 851 (GGKGGGRADMAQAGGSRPQAL) form a disordered region.

The protein belongs to the class-II aminoacyl-tRNA synthetase family. The cofactor is Zn(2+).

Its subcellular location is the cytoplasm. The enzyme catalyses tRNA(Ala) + L-alanine + ATP = L-alanyl-tRNA(Ala) + AMP + diphosphate. Catalyzes the attachment of alanine to tRNA(Ala) in a two-step reaction: alanine is first activated by ATP to form Ala-AMP and then transferred to the acceptor end of tRNA(Ala). Also edits incorrectly charged Ser-tRNA(Ala) and Gly-tRNA(Ala) via its editing domain. The protein is Alanine--tRNA ligase of Chromohalobacter salexigens (strain ATCC BAA-138 / DSM 3043 / CIP 106854 / NCIMB 13768 / 1H11).